We begin with the raw amino-acid sequence, 252 residues long: Phosphoglycolate phosphatase (252 aa).

The active-site Nucleophile is the D13. Residues D13, D15, and D192 each coordinate Mg(2+).

This sequence belongs to the HAD-like hydrolase superfamily. CbbY/CbbZ/Gph/YieH family. In terms of assembly, monomer. The cofactor is Mg(2+). Chloride serves as cofactor.

The catalysed reaction is 2-phosphoglycolate + H2O = glycolate + phosphate. It functions in the pathway organic acid metabolism; glycolate biosynthesis; glycolate from 2-phosphoglycolate: step 1/1. Functionally, specifically catalyzes the dephosphorylation of 2-phosphoglycolate. Is involved in the dissimilation of the intracellular 2-phosphoglycolate formed during the DNA repair of 3'-phosphoglycolate ends, a major class of DNA lesions induced by oxidative stress. This Salmonella choleraesuis (strain SC-B67) protein is Phosphoglycolate phosphatase.